Reading from the N-terminus, the 200-residue chain is Dephospho-CoA kinase (200 aa).

The DPCK domain occupies 3–200 (VIGLTGGIGS…KKYMTLAQGS (198 aa)). An ATP-binding site is contributed by 11–16 (GSGKTS).

It belongs to the CoaE family.

The protein localises to the cytoplasm. It catalyses the reaction 3'-dephospho-CoA + ATP = ADP + CoA + H(+). The protein operates within cofactor biosynthesis; coenzyme A biosynthesis; CoA from (R)-pantothenate: step 5/5. Functionally, catalyzes the phosphorylation of the 3'-hydroxyl group of dephosphocoenzyme A to form coenzyme A. The polypeptide is Dephospho-CoA kinase (Nitrosospira multiformis (strain ATCC 25196 / NCIMB 11849 / C 71)).